Here is a 257-residue protein sequence, read N- to C-terminus: Uracil phosphoribosyltransferase (257 aa).

Residues arginine 77, arginine 102, and 129-137 contribute to the 5-phospho-alpha-D-ribose 1-diphosphate site; that span reads DPMLATGGS. Residues isoleucine 192 and 197–199 each bind uracil; that span reads GDA. A 5-phospho-alpha-D-ribose 1-diphosphate-binding site is contributed by aspartate 198. The tract at residues 203-257 is disordered; the sequence is QFGPNLFTSSAPSRPEAPAGRGRAAAKTPGRRSARSESPSSTSPSARSRKAAPPA. Composition is skewed to low complexity over residues 211-230 and 238-248; these read SSAPSRPEAPAGRGRAAAKT and SESPSSTSPSA.

It belongs to the UPRTase family. The cofactor is Mg(2+).

It catalyses the reaction UMP + diphosphate = 5-phospho-alpha-D-ribose 1-diphosphate + uracil. Its pathway is pyrimidine metabolism; UMP biosynthesis via salvage pathway; UMP from uracil: step 1/1. Its activity is regulated as follows. Allosterically activated by GTP. Its function is as follows. Catalyzes the conversion of uracil and 5-phospho-alpha-D-ribose 1-diphosphate (PRPP) to UMP and diphosphate. This Mycolicibacterium paratuberculosis (strain ATCC BAA-968 / K-10) (Mycobacterium paratuberculosis) protein is Uracil phosphoribosyltransferase.